A 193-amino-acid polypeptide reads, in one-letter code: Ion-translocating oxidoreductase complex subunit A (193 aa).

6 helical membrane-spanning segments follow: residues 5–25, 39–59, 72–92, 102–122, 134–154, and 171–191; these read ILLI…FLGL, IGMG…AYLV, LRTL…EMVI, LLGI…VALL, VIYG…FAAL, and SIAL…SGLV.

Belongs to the NqrDE/RnfAE family. In terms of assembly, the complex is composed of six subunits: RnfA, RnfB, RnfC, RnfD, RnfE and RnfG.

It is found in the cell inner membrane. Part of a membrane-bound complex that couples electron transfer with translocation of ions across the membrane. The polypeptide is Ion-translocating oxidoreductase complex subunit A (Histophilus somni (strain 129Pt) (Haemophilus somnus)).